A 219-amino-acid chain; its full sequence is Octanoyltransferase (219 aa).

The BPL/LPL catalytic domain occupies 24–212 (KFRRECILFL…NLNSFLGPIS (189 aa)). Substrate is bound by residues 69-76 (RGGDFTAH), 140-142 (SIG), and 153-155 (GVA). C171 acts as the Acyl-thioester intermediate in catalysis.

Belongs to the LipB family.

It is found in the cytoplasm. It catalyses the reaction octanoyl-[ACP] + L-lysyl-[protein] = N(6)-octanoyl-L-lysyl-[protein] + holo-[ACP] + H(+). It participates in protein modification; protein lipoylation via endogenous pathway; protein N(6)-(lipoyl)lysine from octanoyl-[acyl-carrier-protein]: step 1/2. Its function is as follows. Catalyzes the transfer of endogenously produced octanoic acid from octanoyl-acyl-carrier-protein onto the lipoyl domains of lipoate-dependent enzymes. Lipoyl-ACP can also act as a substrate although octanoyl-ACP is likely to be the physiological substrate. The polypeptide is Octanoyltransferase (Leptospira borgpetersenii serovar Hardjo-bovis (strain JB197)).